We begin with the raw amino-acid sequence, 866 residues long: Paramyosin (866 aa).

A nonhelical region region spans residues Met-1–Pro-22. A coiled-coil region spans residues Ser-23–Val-839. Residues Gly-840–Met-866 are nonhelical region.

This sequence belongs to the paramyosin family. In terms of assembly, homodimer.

Its subcellular location is the cytoplasm. It localises to the myofibril. Functionally, paramyosin is a major structural component of many thick filaments isolated from invertebrate muscles. The sequence is that of Paramyosin from Schistosoma japonicum (Blood fluke).